We begin with the raw amino-acid sequence, 96 residues long: Small ribosomal subunit protein bS6 (96 aa).

This sequence belongs to the bacterial ribosomal protein bS6 family.

In terms of biological role, binds together with bS18 to 16S ribosomal RNA. This Streptococcus gordonii (strain Challis / ATCC 35105 / BCRC 15272 / CH1 / DL1 / V288) protein is Small ribosomal subunit protein bS6.